The following is a 518-amino-acid chain: 3-phosphoshikimate 1-carboxyvinyltransferase 1, chloroplastic (518 aa).

Residues 1 to 74 constitute a chloroplast transit peptide; that stretch reads MAQISSMGQG…RISASVVTAQ (74 aa). Lys97, Ser98, and Arg102 together coordinate 3-phosphoshikimate. Lys97 contacts phosphoenolpyruvate. The phosphoenolpyruvate site is built by Gly175 and Arg205. Positions 252, 253, 254, 280, 405, and 432 each coordinate 3-phosphoshikimate. Residue Gln254 participates in phosphoenolpyruvate binding. Asp405 acts as the Proton acceptor in catalysis. Phosphoenolpyruvate contacts are provided by Arg436, Arg478, and Lys503.

Belongs to the EPSP synthase family.

Its subcellular location is the plastid. The protein resides in the chloroplast. The catalysed reaction is 3-phosphoshikimate + phosphoenolpyruvate = 5-O-(1-carboxyvinyl)-3-phosphoshikimate + phosphate. The protein operates within metabolic intermediate biosynthesis; chorismate biosynthesis; chorismate from D-erythrose 4-phosphate and phosphoenolpyruvate: step 6/7. Catalyzes the transfer of the enolpyruvyl moiety of phosphoenolpyruvate (PEP) to the 5-hydroxyl of shikimate-3-phosphate (S3P) to produce enolpyruvyl shikimate-3-phosphate and inorganic phosphate. In Nicotiana tabacum (Common tobacco), this protein is 3-phosphoshikimate 1-carboxyvinyltransferase 1, chloroplastic (EPSPS-1).